A 363-amino-acid polypeptide reads, in one-letter code: 3-isopropylmalate dehydrogenase (363 aa).

78-91 (GPKWEHLPPAEQPE) is a binding site for NAD(+). Positions 99, 109, 138, and 227 each coordinate substrate. Residues Asp-227, Asp-251, and Asp-255 each coordinate Mg(2+). NAD(+) is bound at residue 285–297 (GSAPDIAGKNIAN).

The protein belongs to the isocitrate and isopropylmalate dehydrogenases family. LeuB type 1 subfamily. Homodimer. Mg(2+) is required as a cofactor. The cofactor is Mn(2+).

It localises to the cytoplasm. The catalysed reaction is (2R,3S)-3-isopropylmalate + NAD(+) = 4-methyl-2-oxopentanoate + CO2 + NADH. The protein operates within amino-acid biosynthesis; L-leucine biosynthesis; L-leucine from 3-methyl-2-oxobutanoate: step 3/4. Catalyzes the oxidation of 3-carboxy-2-hydroxy-4-methylpentanoate (3-isopropylmalate) to 3-carboxy-4-methyl-2-oxopentanoate. The product decarboxylates to 4-methyl-2 oxopentanoate. In Yersinia pestis, this protein is 3-isopropylmalate dehydrogenase.